The sequence spans 363 residues: MPLSRLMIQQFRNIKACDIRLSAGFNFLIGPNGSGKTSVLEAIYLLGHGRSFKSSLTGRIIQNECSELFVHGRICEHSLSSDQFELPVGINKQRDGSTEVKIGGQTGQKLAQLAQILPLQLIHPEGFELLTDGPKQRRAFIDWGVFHTEPAFFDAWGRFKRLSKQRNALLKSAQSYRELSYWDQELARLAEQIDQWRESYVNQLKNVAEQLCRTFLPEFDIDLKYYRGWEKDQPYQSILEKNFERDQQLGYTFSGPNKADLRIKVNATPVEDVLSRGQLKLMVCALRVAQGQHLTELTGKQCIYLIDDFASELDSLRRQRLADSLKGTGAQVFVSSITESQVADMLDESSKTFHVAHGVIEQG.

30-37 (GPNGSGKT) contacts ATP.

Belongs to the RecF family.

Its subcellular location is the cytoplasm. The RecF protein is involved in DNA metabolism; it is required for DNA replication and normal SOS inducibility. RecF binds preferentially to single-stranded, linear DNA. It also seems to bind ATP. In Vibrio cholerae serotype O1 (strain ATCC 39541 / Classical Ogawa 395 / O395), this protein is DNA replication and repair protein RecF.